The primary structure comprises 560 residues: DNA ligase B (560 aa).

The N6-AMP-lysine intermediate role is filled by lysine 124.

Belongs to the NAD-dependent DNA ligase family. LigB subfamily.

The enzyme catalyses NAD(+) + (deoxyribonucleotide)n-3'-hydroxyl + 5'-phospho-(deoxyribonucleotide)m = (deoxyribonucleotide)n+m + AMP + beta-nicotinamide D-nucleotide.. Its function is as follows. Catalyzes the formation of phosphodiester linkages between 5'-phosphoryl and 3'-hydroxyl groups in double-stranded DNA using NAD as a coenzyme and as the energy source for the reaction. The protein is DNA ligase B of Escherichia coli O17:K52:H18 (strain UMN026 / ExPEC).